We begin with the raw amino-acid sequence, 116 residues long: Small ribosomal subunit protein uS10m (116 aa).

It belongs to the universal ribosomal protein uS10 family.

The protein resides in the mitochondrion. This chain is Small ribosomal subunit protein uS10m (RPS10), found in Reclinomonas americana.